The following is an 89-amino-acid chain: Large ribosomal subunit protein bL27 (89 aa).

The tract at residues 1-21 (MAHKKSGGSSSNGRDSESKRL) is disordered.

This sequence belongs to the bacterial ribosomal protein bL27 family.

The polypeptide is Large ribosomal subunit protein bL27 (Caulobacter vibrioides (strain NA1000 / CB15N) (Caulobacter crescentus)).